A 416-amino-acid polypeptide reads, in one-letter code: Thyroid hormone receptor alpha (416 aa).

Over residues Met-1 to Ser-13 the composition is skewed to polar residues. Residues Met-1 to Ser-37 form a disordered region. A modulating region spans residues Met-1–Pro-58. Basic and acidic residues predominate over residues Gly-15–Pro-24. The Zn(2+) site is built by Cys-59, Cys-62, Cys-76, Cys-79, Cys-97, Cys-103, Cys-113, and Cys-116. 2 NR C4-type zinc fingers span residues Cys-59 to Cys-79 and Cys-97 to Cys-121. The nuclear receptor DNA-binding region spans Cys-59–Asp-133. Residues Ala-169–Asp-413 enclose the NR LBD domain. Arg-234 is a 3,3',5-triiodo-L-thyronine binding site.

The protein belongs to the nuclear hormone receptor family. NR1 subfamily.

It is found in the nucleus. In terms of biological role, nuclear hormone receptor that can act as a repressor or activator of transcription. High affinity receptor for thyroid hormones, including triiodothyronine and thyroxine. The sequence is that of Thyroid hormone receptor alpha (thra) from Hippoglossus hippoglossus (Atlantic halibut).